A 263-amino-acid chain; its full sequence is 1-(5-phosphoribosyl)-5-[(5-phosphoribosylamino)methylideneamino] imidazole-4-carboxamide isomerase (263 aa).

The protein belongs to the HisA/HisF family.

Its subcellular location is the cytoplasm. The enzyme catalyses 1-(5-phospho-beta-D-ribosyl)-5-[(5-phospho-beta-D-ribosylamino)methylideneamino]imidazole-4-carboxamide = 5-[(5-phospho-1-deoxy-D-ribulos-1-ylimino)methylamino]-1-(5-phospho-beta-D-ribosyl)imidazole-4-carboxamide. It participates in amino-acid biosynthesis; L-histidine biosynthesis; L-histidine from 5-phospho-alpha-D-ribose 1-diphosphate: step 4/9. This Eremothecium gossypii (strain ATCC 10895 / CBS 109.51 / FGSC 9923 / NRRL Y-1056) (Yeast) protein is 1-(5-phosphoribosyl)-5-[(5-phosphoribosylamino)methylideneamino] imidazole-4-carboxamide isomerase (HIS6).